Consider the following 340-residue polypeptide: DNA-directed RNA polymerase subunit alpha (340 aa).

The alpha N-terminal domain (alpha-NTD) stretch occupies residues 1–233 (MYRNWRDLIS…EQLSIFINFD (233 aa)). Residues 251-340 (INENLYRSVD…RLRGERKDEE (90 aa)) form an alpha C-terminal domain (alpha-CTD) region.

The protein belongs to the RNA polymerase alpha chain family. Homodimer. The RNAP catalytic core consists of 2 alpha, 1 beta, 1 beta' and 1 omega subunit. When a sigma factor is associated with the core the holoenzyme is formed, which can initiate transcription.

It catalyses the reaction RNA(n) + a ribonucleoside 5'-triphosphate = RNA(n+1) + diphosphate. Functionally, DNA-dependent RNA polymerase catalyzes the transcription of DNA into RNA using the four ribonucleoside triphosphates as substrates. This Geobacter sulfurreducens (strain ATCC 51573 / DSM 12127 / PCA) protein is DNA-directed RNA polymerase subunit alpha.